The chain runs to 187 residues: UPF0301 protein YqgE (187 aa).

Belongs to the UPF0301 (AlgH) family.

This Salmonella paratyphi A (strain ATCC 9150 / SARB42) protein is UPF0301 protein YqgE.